The primary structure comprises 1391 residues: DNA-directed RNA polymerase subunit beta' (1391 aa).

Zn(2+) contacts are provided by C72, C74, C87, and C90. Mg(2+) contacts are provided by D462, D464, and D466. Zn(2+) contacts are provided by C816, C890, C897, and C900.

It belongs to the RNA polymerase beta' chain family. As to quaternary structure, the RNAP catalytic core consists of 2 alpha, 1 beta, 1 beta' and 1 omega subunit. When a sigma factor is associated with the core the holoenzyme is formed, which can initiate transcription. The cofactor is Mg(2+). Zn(2+) serves as cofactor.

The enzyme catalyses RNA(n) + a ribonucleoside 5'-triphosphate = RNA(n+1) + diphosphate. Functionally, DNA-dependent RNA polymerase catalyzes the transcription of DNA into RNA using the four ribonucleoside triphosphates as substrates. The polypeptide is DNA-directed RNA polymerase subunit beta' (Neisseria meningitidis serogroup C / serotype 2a (strain ATCC 700532 / DSM 15464 / FAM18)).